The chain runs to 139 residues: Large ribosomal subunit protein eL34 (139 aa).

Residues 113-139 (VSKPPKIAKAPAAAAAAKPAKTATKSK) are disordered.

This sequence belongs to the eukaryotic ribosomal protein eL34 family.

The sequence is that of Large ribosomal subunit protein eL34 (RpL34) from Ochlerotatus triseriatus (Eastern treehole mosquito).